The chain runs to 256 residues: Probable succinate transporter subunit YjjP (256 aa).

Residues 1–113 (MQTEQQRAVT…KRFSQIQPLR (113 aa)) are Cytoplasmic-facing. Residues 114-135 (YPRWLVALMVGLSCACFCKLNN) form a helical membrane-spanning segment. Over 136-140 (GGWDG) the chain is Periplasmic. Residues 141–158 (AVITFFASTTAMYIRQLL) form a helical membrane-spanning segment. At 159-168 (AQRHLHPQIN) the chain is on the cytoplasmic side. Residues 169 to 189 (FCLTAFAATTISGLLLQLPTF) form a helical membrane-spanning segment. At 190-194 (SNTPT) the chain is on the periplasmic side. A helical membrane pass occupies residues 195–215 (IAMAASVLLLVPGFPLINAVA). Topologically, residues 216 to 228 (DMFKGHINTGLAR) are cytoplasmic. Residues 229 to 249 (WAIASLLTLATCVGVVMALTI) form a helical membrane-spanning segment. The Periplasmic portion of the chain corresponds to 250 to 256 (WGLRGWV).

This sequence belongs to the ThrE exporter (TC 2.A.79) family. The transporter is composed of YjjB and YjjP.

Its subcellular location is the cell inner membrane. Its function is as follows. Involved in succinate export with YjjB. Both proteins are required for export. Contributes to succinate production under both aerobic and anaerobic conditions. The polypeptide is Probable succinate transporter subunit YjjP (yjjP) (Escherichia coli (strain K12)).